We begin with the raw amino-acid sequence, 137 residues long: Envelope glycoprotein L (137 aa).

Positions 1–22 (MRAVGVFLAICLVTIFVLPTWG) are cleaved as a signal peptide. Positions 23-128 (NWAYPCCHVT…SVEDLFGANL (106 aa)) are interaction with gH. 2 disulfide bridges follow: C28–C56 and C29–C79.

It belongs to the herpesviridae glycoprotein L family. In terms of assembly, interacts with glycoprotein H (gH); this interaction is necessary for the correct processing and cell surface expression of gH. The heterodimer gH/gL seems to interact with gB trimers during fusion. The heterodimer gH/gL interacts with host EPHA2 to facilitate virus internalization and fusion.

Its subcellular location is the virion membrane. The protein localises to the host cell membrane. It localises to the host Golgi apparatus. It is found in the host trans-Golgi network. In terms of biological role, the heterodimer glycoprotein H-glycoprotein L is required for the fusion of viral and plasma membranes leading to virus entry into the host cell. Acts as a functional inhibitor of gH and maintains gH in an inhibited form. Upon binding to host integrins, gL dissociates from gH leading to activation of the viral fusion glycoproteins gB and gH. Fusion of EBV with B-lymphocytes requires the additional receptor-binding protein gp42, which forms a complex with gH/gL. The heterodimer gH/gL targets also host EPHA2 to promote viral entry. The sequence is that of Envelope glycoprotein L from Homo sapiens (Human).